The chain runs to 129 residues: Transcription antitermination protein NusB (129 aa).

Belongs to the NusB family.

Its function is as follows. Involved in transcription antitermination. Required for transcription of ribosomal RNA (rRNA) genes. Binds specifically to the boxA antiterminator sequence of the ribosomal RNA (rrn) operons. In Staphylococcus epidermidis (strain ATCC 35984 / DSM 28319 / BCRC 17069 / CCUG 31568 / BM 3577 / RP62A), this protein is Transcription antitermination protein NusB.